Reading from the N-terminus, the 705-residue chain is Rab guanine nucleotide exchange factor sec2 (705 aa).

A coiled-coil region spans residues Gln144–Ala285.

It belongs to the SEC2 family.

Its function is as follows. Guanine nucleotide exchange factor that plays an important role in regulating the growth and virulence, probably by regulating the autophagy pathway. Affects the sensitivity to cell wall disruptors and the cell wall thickness by regulating the expression levels of the cell wall integrity (CWI) pathway genes, thus coordinating the growth and virulence. Positively regulates the autophagy pathway to enhance the expression of CWI pathway genes in the presence of autophagy inducers. This chain is Rab guanine nucleotide exchange factor sec2, found in Aspergillus fumigatus (strain ATCC MYA-4609 / CBS 101355 / FGSC A1100 / Af293) (Neosartorya fumigata).